Consider the following 480-residue polypeptide: MKLDAPFNLDPNVKVRTRFAPSPTGYLHVGGARTALYSWLYAKHNNGEFVLRIEDTDLERSTPEATAAIIEGMEWLNLPWEHGPYYQTKRFDRYNQVIDEMIEQGLAYRCYCTKEHLEELRHTQEQNKEKPRYDRHCLHDHNHSPDEPHVVRFKNPTEGSVVFDDAVRGRIEISNSELDDLIIRRTDGSPTYNFCVVVDDWDMGITHVVRGEDHINNTPRQINILKAIGAPIPTYAHVSMINGDDGQKLSKRHGAVSVMQYRDDGYLPEALINYLVRLGWGHGDQEIFSREEMINYFELDHVSKSASAFNTEKLQWLNQHYIRELPPEYVAKHLEWHYKDQSIDTSNGPALTDIVSMLAERCKTLKEMASSSRYFFEEFETFDEAAAKKHFKGNAAEALAKVKEKLTALSSWNLHSIHEAIEQTAAELEVGMGKVGMPLRVAVTGSGQSPSMDVTLVGIGRDRVLVRIQRAIDFIHAQNA.

The short motif at 21–31 (PSPTGYLHVGG) is the 'HIGH' region element. The Zn(2+) site is built by Cys-110, Cys-112, Cys-137, and His-139. The 'KMSKS' region motif lies at 248 to 252 (KLSKR). Lys-251 contacts ATP.

This sequence belongs to the class-I aminoacyl-tRNA synthetase family. Glutamate--tRNA ligase type 1 subfamily. As to quaternary structure, monomer. Zn(2+) is required as a cofactor.

It localises to the cytoplasm. It carries out the reaction tRNA(Glu) + L-glutamate + ATP = L-glutamyl-tRNA(Glu) + AMP + diphosphate. Catalyzes the attachment of glutamate to tRNA(Glu) in a two-step reaction: glutamate is first activated by ATP to form Glu-AMP and then transferred to the acceptor end of tRNA(Glu). This chain is Glutamate--tRNA ligase, found in Haemophilus influenzae (strain 86-028NP).